The sequence spans 322 residues: Probable heme-iron transport system permease protein IsdF (322 aa).

The next 9 helical transmembrane spans lie at 9–29, 61–81, 89–109, 114–134, 143–163, 179–199, 233–253, 267–287, and 294–314; these read LLFL…FVTG, ILIA…LQAA, ANII…MLFI, FYLP…IILL, VSMI…LEIL, IWSD…LTLL, VFLA…GIIV, VLIP…DLLG, and LEIP…IYLI.

This sequence belongs to the binding-protein-dependent transport system permease family. FecCD subfamily.

The protein resides in the cell membrane. Part of the binding-protein-dependent transport system for heme-iron. Responsible for the translocation of the substrate across the membrane. The polypeptide is Probable heme-iron transport system permease protein IsdF (isdF) (Staphylococcus aureus (strain Mu3 / ATCC 700698)).